The primary structure comprises 377 residues: Phospho-N-acetylmuramoyl-pentapeptide-transferase (377 aa).

Helical transmembrane passes span 2–22, 55–75, 82–102, 122–142, 162–182, 195–215, 236–256, 263–283, 288–308, and 343–363; these read IQLL…TPAL, VAIL…SVLA, ITLS…VGFL, MVLQ…FPDA, LAFA…NLIA, LDGL…LITL, PMDL…FLWW, IFMG…FAVL, LLLV…ILQV, and FWVI…GDWL.

Belongs to the glycosyltransferase 4 family. MraY subfamily. Mg(2+) is required as a cofactor.

The protein localises to the cell membrane. The enzyme catalyses UDP-N-acetyl-alpha-D-muramoyl-L-alanyl-gamma-D-glutamyl-meso-2,6-diaminopimeloyl-D-alanyl-D-alanine + di-trans,octa-cis-undecaprenyl phosphate = di-trans,octa-cis-undecaprenyl diphospho-N-acetyl-alpha-D-muramoyl-L-alanyl-D-glutamyl-meso-2,6-diaminopimeloyl-D-alanyl-D-alanine + UMP. The protein operates within cell wall biogenesis; peptidoglycan biosynthesis. Catalyzes the initial step of the lipid cycle reactions in the biosynthesis of the cell wall peptidoglycan: transfers peptidoglycan precursor phospho-MurNAc-pentapeptide from UDP-MurNAc-pentapeptide onto the lipid carrier undecaprenyl phosphate, yielding undecaprenyl-pyrophosphoryl-MurNAc-pentapeptide, known as lipid I. The protein is Phospho-N-acetylmuramoyl-pentapeptide-transferase of Kocuria rhizophila (strain ATCC 9341 / DSM 348 / NBRC 103217 / DC2201).